Here is a 433-residue protein sequence, read N- to C-terminus: Enolase (433 aa).

Residue glutamine 164 participates in (2R)-2-phosphoglycerate binding. Glutamate 206 functions as the Proton donor in the catalytic mechanism. Residues aspartate 243, glutamate 289, and aspartate 316 each coordinate Mg(2+). Positions 341, 370, 371, and 392 each coordinate (2R)-2-phosphoglycerate. Catalysis depends on lysine 341, which acts as the Proton acceptor.

This sequence belongs to the enolase family. It depends on Mg(2+) as a cofactor.

Its subcellular location is the cytoplasm. The protein localises to the secreted. The protein resides in the cell surface. The catalysed reaction is (2R)-2-phosphoglycerate = phosphoenolpyruvate + H2O. Its pathway is carbohydrate degradation; glycolysis; pyruvate from D-glyceraldehyde 3-phosphate: step 4/5. Its function is as follows. Catalyzes the reversible conversion of 2-phosphoglycerate (2-PG) into phosphoenolpyruvate (PEP). It is essential for the degradation of carbohydrates via glycolysis. The sequence is that of Enolase from Borrelia hermsii (strain HS1 / DAH).